The chain runs to 1306 residues: Activating transcription factor 7-interacting protein 1 (1306 aa).

Met1 is modified (N-acetylmethionine). Residues 1–23 (MDSVEEPQKKVFKARKTMRASDR) are disordered. Lys33 is covalently cross-linked (Glycyl lysine isopeptide (Lys-Gly) (interchain with G-Cter in SUMO2)). Phosphoserine is present on residues Ser57 and Ser112. Disordered stretches follow at residues 104–470 (EDLN…SMET), 496–604 (LPVE…SKRR), 689–722 (AAKD…NNMT), 765–785 (VVSS…PAAP), 871–895 (PLPN…NSST), 920–1060 (RTSL…GPSQ), and 1152–1196 (AGPQ…STSL). Polar residues-rich tracts occupy residues 109–134 (EALS…SPAS) and 143–162 (VSDN…SDNP). Thr124 is modified (phosphothreonine). Composition is skewed to low complexity over residues 185 to 212 (EEPP…CSEP), 246 to 261 (EAAS…ASDE), and 284 to 303 (PSGD…LPRS). The span at 432–441 (QSEKDEHKSP) shows a compositional bias: basic and acidic residues. Ser511, Ser514, Ser516, and Ser533 each carry phosphoserine. Residues 513–523 (GSPSKQESSEN) are compositionally biased toward polar residues. Basic and acidic residues-rich tracts occupy residues 557-566 (EGEKSEKDGK), 592-601 (KSEDMDSVES), and 689-699 (AAKDDLKKRQE). The Nuclear localization signal motif lies at 587-605 (RRKRSKSEDMDSVESKRRR). Lys592 participates in a covalent cross-link: Glycyl lysine isopeptide (Lys-Gly) (interchain with G-Cter in SUMO2). Ser593 is modified (phosphoserine). Residues 596–851 (MDSVESKRRR…NQPSGNVEFI (256 aa)) are interaction with SETDB1. Residues 666–696 (NKRHKAVLTELQAKIARLTKRFGAAKDDLKK) are a coiled coil. Ser700 and Ser707 each carry phosphoserine. The segment covering 713 to 722 (NDTNSNNNMT) has biased composition (polar residues). The span at 871-884 (PLPNPTKPNIPSVP) shows a compositional bias: pro residues. Ser933 is subject to Phosphoserine. Glycyl lysine isopeptide (Lys-Gly) (interchain with G-Cter in SUMO2) cross-links involve residues Lys944 and Lys974. Positions 948-981 (STFSPPSSAEQNSSATPRIVTENQTNKTVDSSIN) are enriched in polar residues. Residues 987–1000 (STSQSGKASSSDSS) show a composition bias toward low complexity. An interaction with SUMO region spans residues 1001–1011 (GVIDLTMDDEE). Residues 1022 to 1040 (SPPSSSTVSTSQPMSRPLQ) are compositionally biased toward low complexity. A Fibronectin type-III 1 domain is found at 1054–1143 (PTSGPSQATI…RVPQTTTYVV (90 aa)). The span at 1170-1187 (PRPLHPAPLPEAPQPQRL) shows a compositional bias: pro residues. Positions 1190-1306 (EAASTSLPQK…TDVISSSQNS (117 aa)) are interaction with MBD1. A Fibronectin type-III 2 domain is found at 1196-1302 (LPQKPHLKLA…DPQSTDVISS (107 aa)).

Belongs to the MCAF family. Interacts with MBD1; the interaction is enhanced when MBD1 is sumoylated. Interacts with SETDB1; the interaction protects SETDB1 from proteasomal degradation and is required to stimulate histone methyltransferase activity and facilitate the conversion of dimethylated to trimethylated H3 'Lys-9'. Interacts with SUMO ubiquitin-like proteins (SUMO1, SUNO2 and SUMO3), with a preference for SUMO2 and SUMO3. Interacts with SP1, ATF7 and ZHX1. Interacts with the general transcription machinery, including ERCC2, ERCC3, GTF2E1, GTF2E2 and POLR2A. In terms of tissue distribution, ubiquitously expressed at all stages studied.

The protein resides in the nucleus. Its function is as follows. Recruiter that couples transcriptional factors to general transcription apparatus and thereby modulates transcription regulation and chromatin formation. Can both act as an activator or a repressor depending on the context. Required for HUSH-mediated heterochromatin formation and gene silencing. Mediates MBD1-dependent transcriptional repression, probably by recruiting complexes containing SETDB1. Stabilizes SETDB1, is required to stimulate histone methyltransferase activity of SETDB1 and facilitates the conversion of dimethylated to trimethylated H3 'Lys-9' (H3K9me3). The complex formed with MBD1 and SETDB1 represses transcription and couples DNA methylation and histone H3 'Lys-9' trimethylation (H3K9me3). Facilitates telomerase TERT and TERC gene expression by SP1 in cancer cells. The chain is Activating transcription factor 7-interacting protein 1 (Atf7ip) from Mus musculus (Mouse).